The chain runs to 186 residues: UPF0301 protein Sfri_2850 (186 aa).

This sequence belongs to the UPF0301 (AlgH) family.

This Shewanella frigidimarina (strain NCIMB 400) protein is UPF0301 protein Sfri_2850.